A 197-amino-acid chain; its full sequence is Probable GTP-binding protein EngB (197 aa).

Residues 22–195 (KRIEIAFVGR…LKVLESVIDF (174 aa)) enclose the EngB-type G domain. Residues 30 to 37 (GRSNVGKS), 57 to 61 (GKTRL), 75 to 78 (DLPG), 142 to 145 (TKVD), and 174 to 176 (FSS) contribute to the GTP site. Mg(2+)-binding residues include serine 37 and threonine 59.

It belongs to the TRAFAC class TrmE-Era-EngA-EngB-Septin-like GTPase superfamily. EngB GTPase family. The cofactor is Mg(2+).

Its function is as follows. Necessary for normal cell division and for the maintenance of normal septation. The chain is Probable GTP-binding protein EngB from Clostridium kluyveri (strain ATCC 8527 / DSM 555 / NBRC 12016 / NCIMB 10680 / K1).